Reading from the N-terminus, the 187-residue chain is UPF0301 protein CKO_04323 (187 aa).

This sequence belongs to the UPF0301 (AlgH) family.

The protein is UPF0301 protein CKO_04323 of Citrobacter koseri (strain ATCC BAA-895 / CDC 4225-83 / SGSC4696).